A 526-amino-acid polypeptide reads, in one-letter code: Ribonuclease Y (526 aa).

A helical membrane pass occupies residues 10 to 30; that stretch reads ITFILLIVVGALGGALVGYFI. Positions 216–279 constitute a KH domain; the sequence is TVTVVEIPNE…EVAKRALTIL (64 aa). In terms of domain architecture, HD spans 342–435; it reads VLKHSIEVAF…VAAADALSAA (94 aa).

This sequence belongs to the RNase Y family.

The protein localises to the cell membrane. Endoribonuclease that initiates mRNA decay. The polypeptide is Ribonuclease Y (Acholeplasma laidlawii (strain PG-8A)).